The chain runs to 524 residues: MSSPAPKSPELSDKSKKYDRQIRLWGEHGQTLLEAATVCLVNVTAVGCETAKGLVLPGIGGFTVADGSTVKEEDLGNNFFLDSSYLGKSKALACMQLLQELNPDVNGDYVDESADFLLANRPNFFDSFDLVIASNLNEQTLLLLAERLWELNVPLIYCRSLGMLGTIRLQIREHCIVEAHPDNRQFDLRLEHPFDALREHLDGTEVTSKVPWLLVLHKYLNVWQKQQADGTQTPRNYKEKNQLKETIREEMKADEENYEEAIKAVNTAFGAGQVPKSLKAIFEDDACEQLNKKSNVFWIMAKALKHFVIHENEGHLPLPGVLPDMTANTDSYIALQHIYRQQALQDADQVYHKCQEYLKQLALPADSIDERSVRLICKEAAGLAVIRGTRIAEEYEKSSRLLPLVEDNELQGNLTAYNFALRAYERFLSECGNIPGECIVEQDIGRLKSIAAKMLSDLGMHATISDDVLHEICRYGGAELHAVSAFIGGCAAQEVIKIITKQYKPIDNTFIYNAITTESVTLKL.

It belongs to the ubiquitin-activating E1 family. ULA1 subfamily. In terms of assembly, heterodimer of Uba3 and APP-BP1. The complex binds Nedd8 and UbcE2M. Interacts with Appl (via the intracellular domain, ICD).

Its pathway is protein modification; protein neddylation. Functionally, regulatory subunit of the dimeric Uba3-APP-BP1 E1 enzyme. E1 activates Nedd8 by first adenylating its C-terminal glycine residue with ATP, thereafter linking this residue to the side chain of the catalytic cysteine, yielding a Nedd8-Uba3 thioester and free AMP. E1 finally transfers Nedd8 to the catalytic cysteine of UbcE2M. Required for Cul1 and Cul3 neddylation. Appl and APP-BP1 interact antagonistically during development. This is Nedd8-activating enzyme E1 regulatory subunit (APP-BP1) from Drosophila melanogaster (Fruit fly).